Here is a 257-residue protein sequence, read N- to C-terminus: Global transcriptional regulator CodY (257 aa).

The interval 1–155 (MSLLSKTREL…AATVIGMEIL (155 aa)) is GAF domain. The H-T-H motif DNA-binding region spans 203–222 (ASKVADRVGITRSVIVNALR).

Belongs to the CodY family.

It localises to the cytoplasm. Its function is as follows. DNA-binding global transcriptional regulator which is involved in the adaptive response to starvation and acts by directly or indirectly controlling the expression of numerous genes in response to nutrient availability. During rapid exponential growth, CodY is highly active and represses genes whose products allow adaptation to nutrient depletion. The chain is Global transcriptional regulator CodY from Staphylococcus saprophyticus subsp. saprophyticus (strain ATCC 15305 / DSM 20229 / NCIMB 8711 / NCTC 7292 / S-41).